The chain runs to 551 residues: Glucose-6-phosphate isomerase (551 aa).

The Proton donor role is filled by glutamate 349. Active-site residues include histidine 378 and lysine 480.

This sequence belongs to the GPI family.

The protein localises to the cytoplasm. It carries out the reaction alpha-D-glucose 6-phosphate = beta-D-fructose 6-phosphate. The protein operates within carbohydrate biosynthesis; gluconeogenesis. Its pathway is carbohydrate degradation; glycolysis; D-glyceraldehyde 3-phosphate and glycerone phosphate from D-glucose: step 2/4. Its function is as follows. Catalyzes the reversible isomerization of glucose-6-phosphate to fructose-6-phosphate. The polypeptide is Glucose-6-phosphate isomerase (Prochlorococcus marinus (strain MIT 9313)).